We begin with the raw amino-acid sequence, 196 residues long: Large ribosomal subunit protein eL15 (196 aa).

Positions 156-196 are disordered; the sequence is HRGRAERGKTSAGRKGRGMRTRGRGTEKTRPSIRSHANQGK. Residues 167-178 are compositionally biased toward basic residues; sequence AGRKGRGMRTRG.

Belongs to the eukaryotic ribosomal protein eL15 family.

The polypeptide is Large ribosomal subunit protein eL15 (Methanoregula boonei (strain DSM 21154 / JCM 14090 / 6A8)).